Reading from the N-terminus, the 96-residue chain is Co-chaperonin GroES (96 aa).

The protein belongs to the GroES chaperonin family. As to quaternary structure, heptamer of 7 subunits arranged in a ring. Interacts with the chaperonin GroEL.

It is found in the cytoplasm. In terms of biological role, together with the chaperonin GroEL, plays an essential role in assisting protein folding. The GroEL-GroES system forms a nano-cage that allows encapsulation of the non-native substrate proteins and provides a physical environment optimized to promote and accelerate protein folding. GroES binds to the apical surface of the GroEL ring, thereby capping the opening of the GroEL channel. This Geotalea uraniireducens (strain Rf4) (Geobacter uraniireducens) protein is Co-chaperonin GroES.